The following is a 31-amino-acid chain: L-amino-acid oxidase (31 aa).

Belongs to the flavin monoamine oxidase family. FIG1 subfamily. Homodimer; non-covalently linked. FAD is required as a cofactor. In terms of processing, N-glycosylated. In terms of tissue distribution, expressed by the venom gland.

Its subcellular location is the secreted. It catalyses the reaction an L-alpha-amino acid + O2 + H2O = a 2-oxocarboxylate + H2O2 + NH4(+). The enzyme catalyses L-leucine + O2 + H2O = 4-methyl-2-oxopentanoate + H2O2 + NH4(+). The catalysed reaction is L-phenylalanine + O2 + H2O = 3-phenylpyruvate + H2O2 + NH4(+). It carries out the reaction L-histidine + O2 + H2O = 3-(imidazol-5-yl)pyruvate + H2O2 + NH4(+). Its function is as follows. Catalyzes an oxidative deamination of predominantly hydrophobic and aromatic L-amino acids, thus producing hydrogen peroxide that may contribute to the diverse toxic effects of this enzyme. Is moderately active on L-Leu, L-His, and L-Phe, and very weakly active on L-Thr, and L-Cys. Exhibits diverse biological activities, such as hemorrhage, hemolysis, edema, antibacterial and antiparasitic activities, as well as regulation of platelet aggregation. Its effect on platelets is controversial, since it either induces aggregation or inhibits agonist-induced aggregation. These different effects are probably due to different experimental conditions. Inhibits growth of B.subtilis strain ATCC 6633 (MIC=32 uM), E.faecalis strain ATCC 12953 (MIC=32 uM), S.aureus strain ATCC 29213 (MIC=32 uM), S.pyogenes strain ATCC 19615 (MIC=8 uM), E.coli strain ATCC 8739 (MIC=4 uM), K.pneumoniae strain ATCC 13885 (MIC=2 uM), P.mirabilis strain ATCC 25933 (MIC=2 uM), P.aeruginosa strain ATCC 15442 (MIC=8 uM) and S.typhimurium strain ATCC 14028 (MIC=8 uM). In Bothrops mattogrossensis (Pitviper), this protein is L-amino-acid oxidase.